The primary structure comprises 91 residues: MEFFTMCMLAAGFGMAIGAFGTGIGQGLAVKNAVEGVSRNPGASGKILTTMMIGLAMIESLAIYVLVVCLIILFANPYKDVAIELAKAVVK.

2 helical membrane passes run 4 to 24 and 53 to 73; these read FTMC…GTGI and IGLA…LIIL.

The protein belongs to the ATPase C chain family. F-type ATPases have 2 components, F(1) - the catalytic core - and F(0) - the membrane proton channel. F(1) has five subunits: alpha(3), beta(3), gamma(1), delta(1), epsilon(1). F(0) has three main subunits: a(1), b(2) and c(10-14). The alpha and beta chains form an alternating ring which encloses part of the gamma chain. F(1) is attached to F(0) by a central stalk formed by the gamma and epsilon chains, while a peripheral stalk is formed by the delta and b chains.

The protein resides in the cell inner membrane. F(1)F(0) ATP synthase produces ATP from ADP in the presence of a proton or sodium gradient. F-type ATPases consist of two structural domains, F(1) containing the extramembraneous catalytic core and F(0) containing the membrane proton channel, linked together by a central stalk and a peripheral stalk. During catalysis, ATP synthesis in the catalytic domain of F(1) is coupled via a rotary mechanism of the central stalk subunits to proton translocation. In terms of biological role, key component of the F(0) channel; it plays a direct role in translocation across the membrane. A homomeric c-ring of between 10-14 subunits forms the central stalk rotor element with the F(1) delta and epsilon subunits. This chain is ATP synthase subunit c, found in Geobacter sulfurreducens (strain ATCC 51573 / DSM 12127 / PCA).